Here is a 307-residue protein sequence, read N- to C-terminus: Acetaldehyde dehydrogenase 2 (307 aa).

NAD(+) is bound at residue 13-16; the sequence is SGNI. Cys132 acts as the Acyl-thioester intermediate in catalysis. NAD(+) is bound by residues 163-171 and Asn274; that span reads SIGPGTRAN.

Belongs to the acetaldehyde dehydrogenase family.

The enzyme catalyses acetaldehyde + NAD(+) + CoA = acetyl-CoA + NADH + H(+). The sequence is that of Acetaldehyde dehydrogenase 2 from Methylibium petroleiphilum (strain ATCC BAA-1232 / LMG 22953 / PM1).